Reading from the N-terminus, the 146-residue chain is 3-dehydroquinate dehydratase (146 aa).

Tyr-23 (proton acceptor) is an active-site residue. Residues Asn-74, His-80, and Asp-87 each contribute to the substrate site. His-100 serves as the catalytic Proton donor. Residues 101 to 102 (IS) and Arg-111 each bind substrate.

It belongs to the type-II 3-dehydroquinase family. In terms of assembly, homododecamer.

The catalysed reaction is 3-dehydroquinate = 3-dehydroshikimate + H2O. Its pathway is metabolic intermediate biosynthesis; chorismate biosynthesis; chorismate from D-erythrose 4-phosphate and phosphoenolpyruvate: step 3/7. In terms of biological role, catalyzes a trans-dehydration via an enolate intermediate. This is 3-dehydroquinate dehydratase from Bacillus cereus (strain B4264).